The sequence spans 468 residues: Trigger factor (468 aa).

Residues 162–243 (GDVLTLDLQA…VSQVAARELP (82 aa)) form the PPIase FKBP-type domain. Residues 428 to 468 (NGEIVDLDDEEDEETEAAEADATEAADAEKADDKAEEKTEG) form a disordered region. The segment covering 432 to 453 (VDLDDEEDEETEAAEADATEAA) has biased composition (acidic residues). Residues 454 to 468 (DAEKADDKAEEKTEG) are compositionally biased toward basic and acidic residues.

Belongs to the FKBP-type PPIase family. Tig subfamily.

It is found in the cytoplasm. It carries out the reaction [protein]-peptidylproline (omega=180) = [protein]-peptidylproline (omega=0). Functionally, involved in protein export. Acts as a chaperone by maintaining the newly synthesized protein in an open conformation. Functions as a peptidyl-prolyl cis-trans isomerase. The protein is Trigger factor of Streptomyces coelicolor (strain ATCC BAA-471 / A3(2) / M145).